The sequence spans 143 residues: Sporulation-specific cell division protein SsgB (143 aa).

The protein belongs to the SsgA family. As to quaternary structure, interacts with SsgA. Interacts with FtsZ (via N-terminus).

The protein resides in the cell septum. Involved in sporulation-specific cell division. Required for early stages of sporulation. Important in the process of growth cessation prior to sporulation-specific cell division. Recruits cell division protein FtsZ to the future septum sites and tethers the contractile ring structure (Z ring) to the cytoplasmic membrane during sporulation. Stimulates polymerization and filament length of FtsZ in vitro. This Frankia casuarinae (strain DSM 45818 / CECT 9043 / HFP020203 / CcI3) protein is Sporulation-specific cell division protein SsgB.